The primary structure comprises 587 residues: Arginine--tRNA ligase (587 aa).

The 'HIGH' region signature appears at 127–137 (PNLAKEMHVGH).

The protein belongs to the class-I aminoacyl-tRNA synthetase family. In terms of assembly, monomer.

The protein resides in the cytoplasm. It catalyses the reaction tRNA(Arg) + L-arginine + ATP = L-arginyl-tRNA(Arg) + AMP + diphosphate. The chain is Arginine--tRNA ligase from Pseudomonas aeruginosa (strain UCBPP-PA14).